The primary structure comprises 378 residues: MASETIVNLLDLDAEGLVAYCGGLGEKAFRAKQLQRWIHQYNAADFDGMTDLAKSLREKLKGRAVIGTPDILSDHVSADGTRKWLINVGNGNAVETVFIPEETRGTLCVSSQAGCAVNCRFCSTGKQGFSRNLSTGEIVGQLRMAEFALRASLGRAPGPNGKAERVITNVVMMGMGEPLLNYSAVVPAMRLMLDDNAYGLSRRRVTLSTSGVVPMMDRLGAELPVALAVSLHAPNDALRDELVPLNKKHPLRELMAACQRYLKVAPRDFITFEYCMLDGVNDTEAHARELLALTRDVPCKFNLIPFNPFPESGLLRSKTEQIKRFAQVLIDAGVVTTIRKTRGDDIDAACGQLAGAVKDRTRLAERTGATKIIEVRAV.

The active-site Proton acceptor is E95. In terms of domain architecture, Radical SAM core spans 101-345 (EETRGTLCVS…TTIRKTRGDD (245 aa)). A disulfide bond links C108 and C350. Residues C115, C119, and C122 each contribute to the [4Fe-4S] cluster site. S-adenosyl-L-methionine is bound by residues 176–177 (GE), S208, 230–232 (SLH), and N307. C350 serves as the catalytic S-methylcysteine intermediate.

This sequence belongs to the radical SAM superfamily. RlmN family. Requires [4Fe-4S] cluster as cofactor.

It is found in the cytoplasm. The enzyme catalyses adenosine(2503) in 23S rRNA + 2 reduced [2Fe-2S]-[ferredoxin] + 2 S-adenosyl-L-methionine = 2-methyladenosine(2503) in 23S rRNA + 5'-deoxyadenosine + L-methionine + 2 oxidized [2Fe-2S]-[ferredoxin] + S-adenosyl-L-homocysteine. It catalyses the reaction adenosine(37) in tRNA + 2 reduced [2Fe-2S]-[ferredoxin] + 2 S-adenosyl-L-methionine = 2-methyladenosine(37) in tRNA + 5'-deoxyadenosine + L-methionine + 2 oxidized [2Fe-2S]-[ferredoxin] + S-adenosyl-L-homocysteine. Functionally, specifically methylates position 2 of adenine 2503 in 23S rRNA and position 2 of adenine 37 in tRNAs. m2A2503 modification seems to play a crucial role in the proofreading step occurring at the peptidyl transferase center and thus would serve to optimize ribosomal fidelity. This chain is Dual-specificity RNA methyltransferase RlmN, found in Burkholderia thailandensis (strain ATCC 700388 / DSM 13276 / CCUG 48851 / CIP 106301 / E264).